We begin with the raw amino-acid sequence, 294 residues long: Cytidine deaminase (294 aa).

CMP/dCMP-type deaminase domains are found at residues 48-168 (DEDA…FGPK) and 186-294 (LTGD…VLLA). 89–91 (NME) is a binding site for substrate. Residue histidine 102 participates in Zn(2+) binding. The Proton donor role is filled by glutamate 104. 2 residues coordinate Zn(2+): cysteine 129 and cysteine 132.

This sequence belongs to the cytidine and deoxycytidylate deaminase family. As to quaternary structure, homodimer. Requires Zn(2+) as cofactor.

It catalyses the reaction cytidine + H2O + H(+) = uridine + NH4(+). The catalysed reaction is 2'-deoxycytidine + H2O + H(+) = 2'-deoxyuridine + NH4(+). Its function is as follows. This enzyme scavenges exogenous and endogenous cytidine and 2'-deoxycytidine for UMP synthesis. The chain is Cytidine deaminase from Escherichia coli O139:H28 (strain E24377A / ETEC).